We begin with the raw amino-acid sequence, 222 residues long: Ribonuclease 3 (222 aa).

An RNase III domain is found at 5-127 (PIKLEKKLKL…LIGAIYLDKG (123 aa)). Position 41 (glutamate 41) interacts with Mg(2+). Aspartate 45 is an active-site residue. The Mg(2+) site is built by aspartate 113 and glutamate 116. Residue glutamate 116 is part of the active site. The DRBM domain maps to 152-221 (DAKTKLQEYS…ASLCLQDIFK (70 aa)).

The protein belongs to the ribonuclease III family. As to quaternary structure, homodimer. Mg(2+) is required as a cofactor.

The protein localises to the cytoplasm. The catalysed reaction is Endonucleolytic cleavage to 5'-phosphomonoester.. Functionally, digests double-stranded RNA. Involved in the processing of primary rRNA transcript to yield the immediate precursors to the large and small rRNAs (23S and 16S). Processes some mRNAs, and tRNAs when they are encoded in the rRNA operon. Processes pre-crRNA and tracrRNA of type II CRISPR loci if present in the organism. In Pelagibacter ubique (strain HTCC1062), this protein is Ribonuclease 3.